Reading from the N-terminus, the 338-residue chain is Tetraacyldisaccharide 4'-kinase (338 aa).

63 to 70 (TVGGAGKT) is an ATP binding site.

This sequence belongs to the LpxK family.

The catalysed reaction is a lipid A disaccharide + ATP = a lipid IVA + ADP + H(+). It participates in glycolipid biosynthesis; lipid IV(A) biosynthesis; lipid IV(A) from (3R)-3-hydroxytetradecanoyl-[acyl-carrier-protein] and UDP-N-acetyl-alpha-D-glucosamine: step 6/6. Transfers the gamma-phosphate of ATP to the 4'-position of a tetraacyldisaccharide 1-phosphate intermediate (termed DS-1-P) to form tetraacyldisaccharide 1,4'-bis-phosphate (lipid IVA). The chain is Tetraacyldisaccharide 4'-kinase from Hahella chejuensis (strain KCTC 2396).